The following is a 247-amino-acid chain: 2,3-bisphosphoglycerate-dependent phosphoglycerate mutase (247 aa).

Substrate-binding positions include 8 to 15 (RHGESQWN), 21 to 22 (TG), Arg60, 87 to 90 (ERHY), Lys98, 114 to 115 (RR), and 183 to 184 (GN). Catalysis depends on His9, which acts as the Tele-phosphohistidine intermediate. Residue Glu87 is the Proton donor/acceptor of the active site.

It belongs to the phosphoglycerate mutase family. BPG-dependent PGAM subfamily.

It catalyses the reaction (2R)-2-phosphoglycerate = (2R)-3-phosphoglycerate. It participates in carbohydrate degradation; glycolysis; pyruvate from D-glyceraldehyde 3-phosphate: step 3/5. Functionally, catalyzes the interconversion of 2-phosphoglycerate and 3-phosphoglycerate. This chain is 2,3-bisphosphoglycerate-dependent phosphoglycerate mutase, found in Chlorobium chlorochromatii (strain CaD3).